The chain runs to 148 residues: HTH-type transcriptional regulator SarZ (148 aa).

Residues 9–139 (SKQLCFLFYV…LVEDLQNFVT (131 aa)) form the HTH marR-type domain. A DNA-binding region (H-T-H motif) is located at residues 55-78 (IKKLGERVFLDSGTLTPLLKKLEK).

Belongs to the SarZ family.

The protein resides in the cytoplasm. The polypeptide is HTH-type transcriptional regulator SarZ (sarZ) (Staphylococcus epidermidis (strain ATCC 35984 / DSM 28319 / BCRC 17069 / CCUG 31568 / BM 3577 / RP62A)).